The sequence spans 198 residues: MILIIDNYDSFTYNLVQYVGVLTDVAVVKNDDDSLGNMAEKADALIFSPGPGWPADAGKMETLIQQFAGQKPILGICLGFQAIVEVFGGKLRLAHQVMHGKNSQVRQTSGNLIFNHLPSKFLVMRYHSIVMDEAVALPDFAITAVATDDGEIMAIENEKEQIYGLQFHPESIGTLDGMTMIENFVNQVNENKESSNEK.

The 194-residue stretch at 1–194 (MILIIDNYDS…VNQVNENKES (194 aa)) folds into the Glutamine amidotransferase type-1 domain. Residue 50 to 52 (GPG) coordinates L-glutamine. Cysteine 77 (nucleophile; for GATase activity) is an active-site residue. Residues glutamine 81 and 128 to 129 (SI) each bind L-glutamine. Residues histidine 168 and glutamate 170 each act as for GATase activity in the active site.

As to quaternary structure, heterotetramer consisting of two non-identical subunits: a beta subunit (TrpG) and a large alpha subunit (TrpE).

It catalyses the reaction chorismate + L-glutamine = anthranilate + pyruvate + L-glutamate + H(+). The protein operates within amino-acid biosynthesis; L-tryptophan biosynthesis; L-tryptophan from chorismate: step 1/5. In terms of biological role, part of a heterotetrameric complex that catalyzes the two-step biosynthesis of anthranilate, an intermediate in the biosynthesis of L-tryptophan. In the first step, the glutamine-binding beta subunit (TrpG) of anthranilate synthase (AS) provides the glutamine amidotransferase activity which generates ammonia as a substrate that, along with chorismate, is used in the second step, catalyzed by the large alpha subunit of AS (TrpE) to produce anthranilate. In the absence of TrpG, TrpE can synthesize anthranilate directly from chorismate and high concentrations of ammonia. The polypeptide is Anthranilate synthase component 2 (trpG) (Lactococcus lactis subsp. lactis (strain IL1403) (Streptococcus lactis)).